Consider the following 349-residue polypeptide: Cbb3-type cytochrome c oxidase subunit CcoP (349 aa).

A disordered region spans residues 1 to 67 (MADTDDEHAS…RVVRDRKGGR (67 aa)). Topologically, residues 1-96 (MADTDDEHAS…NPLPRWWLWT (96 aa)) are cytoplasmic. The span at 16-30 (NRIELERQAADEAHK) shows a compositional bias: basic and acidic residues. A helical transmembrane segment spans residues 97 to 117 (FYATIVWGVLYLIAYPAIPLV). Topologically, residues 118–349 (NGATQGLLGQ…AYVHSLGGGE (232 aa)) are periplasmic. 2 consecutive Cytochrome c domains span residues 168 to 258 (YTAN…LELG) and 265 to 346 (ALAA…HSLG). Residues Cys181, Cys184, His185, Met233, Cys278, Cys281, His282, and Met323 each contribute to the heme c site.

It belongs to the CcoP / FixP family. In terms of assembly, component of the cbb3-type cytochrome c oxidase at least composed of CcoN, CcoO, CcoQ and CcoP. The cofactor is heme c.

It localises to the cell inner membrane. It participates in energy metabolism; oxidative phosphorylation. Functionally, C-type cytochrome. Part of the cbb3-type cytochrome c oxidase complex. CcoP subunit is required for transferring electrons from donor cytochrome c via its heme groups to CcoO subunit. From there, electrons are shuttled to the catalytic binuclear center of CcoN subunit where oxygen reduction takes place. The complex also functions as a proton pump. The polypeptide is Cbb3-type cytochrome c oxidase subunit CcoP (Paracoccus denitrificans (strain Pd 1222)).